The chain runs to 403 residues: Cysteine desulfurase IscS (403 aa).

Pyridoxal 5'-phosphate-binding positions include 75–76, Asn155, Gln183, and 203–205; these read AT and SAH. Residue Lys206 is modified to N6-(pyridoxal phosphate)lysine. A pyridoxal 5'-phosphate-binding site is contributed by Thr243. Cys328 serves as the catalytic Cysteine persulfide intermediate. Cys328 contributes to the [2Fe-2S] cluster binding site.

It belongs to the class-V pyridoxal-phosphate-dependent aminotransferase family. NifS/IscS subfamily. Homodimer. Forms a heterotetramer with IscU, interacts with other sulfur acceptors. It depends on pyridoxal 5'-phosphate as a cofactor.

It localises to the cytoplasm. The catalysed reaction is (sulfur carrier)-H + L-cysteine = (sulfur carrier)-SH + L-alanine. It functions in the pathway cofactor biosynthesis; iron-sulfur cluster biosynthesis. Master enzyme that delivers sulfur to a number of partners involved in Fe-S cluster assembly, tRNA modification or cofactor biosynthesis. Catalyzes the removal of elemental sulfur atoms from cysteine to produce alanine. Functions as a sulfur delivery protein for Fe-S cluster synthesis onto IscU, an Fe-S scaffold assembly protein, as well as other S acceptor proteins. This is Cysteine desulfurase IscS from Psychromonas ingrahamii (strain DSM 17664 / CCUG 51855 / 37).